The sequence spans 901 residues: Flowering time control protein FPA (901 aa).

RRM domains are found at residues 18–90 (NNLW…YARP), 95–166 (KSLW…FLRS), and 206–281 (KVLW…YSND). Positions 343-416 (VGKEPNWRRP…SVDGFTPMGV (74 aa)) are disordered. The SPOC domain occupies 441–537 (WRGMIAKGGT…DDGTTLFLVP (97 aa)). Positions 655–736 (SQPAAPESHQ…YPPASNNPNY (82 aa)) are disordered. 2 stretches are compositionally biased toward polar residues: residues 664–682 (QPMSGPSTVVSTAHQSNGL) and 700–716 (HDASNQSFQQYGNQYTP).

The protein belongs to the RRM Spen family. Expressed in roots, leaves, stems and flowers. Highest expression in flower stems and meristematic regions.

Its subcellular location is the nucleus. In terms of biological role, plays a role in the regulation of flowering time in the autonomous flowering pathway by decreasing FLOWERING LOCUS C mRNA levels. Required for RNA-mediated chromatin silencing of a range of loci in the genome. Cotranscriptionally recognizes aberrant RNA and marks it for silencing. Controls alternative cleavage and polyadenylation on pre-mRNAs and antisense RNAs. Acts redundantly with FCA to prevent the expression of distally polyadenylated antisense RNAs at the FLC locus. This Arabidopsis thaliana (Mouse-ear cress) protein is Flowering time control protein FPA (FPA).